The sequence spans 310 residues: Carbamate kinase 1 (310 aa).

Belongs to the carbamate kinase family.

The protein localises to the cytoplasm. It catalyses the reaction hydrogencarbonate + NH4(+) + ATP = carbamoyl phosphate + ADP + H2O + H(+). It functions in the pathway metabolic intermediate metabolism; carbamoyl phosphate degradation; CO(2) and NH(3) from carbamoyl phosphate: step 1/1. The chain is Carbamate kinase 1 (arcC1) from Staphylococcus aureus (strain MRSA252).